A 365-amino-acid chain; its full sequence is MKTSFLAHSVAIVRSNFKGLLFTACIVIFAMYLSSVQSIKDTTHLAATAFAIIIGVLLSPWFFKYQHHFQAGVHFSAKKLLRLGIVLYGFNITLTELLSVGLKGFLLSAIVIFFVFIIALFVGTKIFKLDKETSMLVGAGSAICGAAAVLALESSLKSDPFKGILAVGTVVIFGLVFMFLYPIAFSLNLFPFFDQNAMGVFMGATLHEVANVAGAAEMAKDMAGFEQGASNVAVIIKMMRVILLVPFLLIVTYFFAKNQHSSSGKTAKSITIPYFAFAFLGMIVLNTYLASKESILGIATSDIISLGKTLCTLCIVFAMAALGLQIDFKKFLKSGSRVFGLAFVLGLVLIFGGYFLTLAFKGILW.

11 helical membrane passes run 12–34, 44–63, 83–100, 105–127, 134–153, 163–185, 197–219, 234–256, 269–288, 303–325, and 338–360; these read IVRSNFKGLLFTACIVIFAMYLS, HLAATAFAIIIGVLLSPWFF, LGIVLYGFNITLTELLSV, FLLSAIVIFFVFIIALFVGTKIF, SMLVGAGSAICGAAAVLALE, GILAVGTVVIFGLVFMFLYPIAF, AMGVFMGATLHEVANVAGAAEMA, VIIKMMRVILLVPFLLIVTYFFA, SITIPYFAFAFLGMIVLNTY, IISLGKTLCTLCIVFAMAALGLQ, and VFGLAFVLGLVLIFGGYFLTLAF.

The protein belongs to the UPF0324 family.

The protein resides in the cell membrane. The chain is UPF0324 membrane protein Cj0999c from Campylobacter jejuni subsp. jejuni serotype O:2 (strain ATCC 700819 / NCTC 11168).